A 76-amino-acid chain; its full sequence is Repressor protein of division inhibition gene dicB (76 aa).

The DNA-binding element occupies 13-33; sequence KTKLAQAAGIRLASLYSWKGD.

In terms of biological role, this protein is a repressor of division inhibition gene dicB. This Escherichia coli (strain K12) protein is Repressor protein of division inhibition gene dicB (dicC).